Consider the following 392-residue polypeptide: Alkaline phosphatase L (392 aa).

A signal peptide spans 1 to 23; sequence MYKRSLIAASLSVAALVSAQAMA.

Belongs to the PstS family. In terms of assembly, homodimer.

It localises to the secreted. It is found in the periplasm. The enzyme catalyses a phosphate monoester + H2O = an alcohol + phosphate. Has both a phosphomonoesterase and phosphodiesterase activity. In Pseudomonas aeruginosa (strain UCBPP-PA14), this protein is Alkaline phosphatase L.